A 401-amino-acid polypeptide reads, in one-letter code: Phosphoglycerate kinase (401 aa).

Substrate is bound by residues 21 to 23, Arg-36, 59 to 62, Arg-116, and Arg-156; these read DLN and HQGR. Residues Glu-331 and 357–360 contribute to the ATP site; that span reads GGDT.

Belongs to the phosphoglycerate kinase family.

The protein resides in the cytoplasm. It catalyses the reaction (2R)-3-phosphoglycerate + ATP = (2R)-3-phospho-glyceroyl phosphate + ADP. The protein operates within carbohydrate degradation; glycolysis; pyruvate from D-glyceraldehyde 3-phosphate: step 2/5. The sequence is that of Phosphoglycerate kinase (pgk) from Haloarcula vallismortis (Halobacterium vallismortis).